Here is an 87-residue protein sequence, read N- to C-terminus: Small ribosomal subunit protein bS20 (87 aa).

The segment covering 1–11 (MANIKSKKKRI) has biased composition (basic residues). The interval 1–25 (MANIKSKKKRIKTNEKARQRNKAIR) is disordered.

This sequence belongs to the bacterial ribosomal protein bS20 family.

In terms of biological role, binds directly to 16S ribosomal RNA. This chain is Small ribosomal subunit protein bS20, found in Corynebacterium kroppenstedtii (strain DSM 44385 / JCM 11950 / CIP 105744 / CCUG 35717).